The primary structure comprises 80 residues: Cytochrome c-553 (80 aa).

Positions 13, 16, 17, and 58 each coordinate heme c.

In terms of processing, binds 1 heme c group covalently per subunit.

The protein localises to the periplasm. Functionally, natural electron acceptor for a formate dehydrogenase. This Desulfomicrobium norvegicum (strain DSM 1741 / NCIMB 8310) (Desulfovibrio baculatus (strain Norway 4)) protein is Cytochrome c-553.